We begin with the raw amino-acid sequence, 247 residues long: 2,3-bisphosphoglycerate-dependent phosphoglycerate mutase (247 aa).

Substrate is bound by residues 8–15 (RHGQSLWN), 21–22 (TG), arginine 60, 87–90 (ERHY), lysine 98, 114–115 (RR), and 183–184 (GN). Histidine 9 functions as the Tele-phosphohistidine intermediate in the catalytic mechanism. Glutamate 87 acts as the Proton donor/acceptor in catalysis.

Belongs to the phosphoglycerate mutase family. BPG-dependent PGAM subfamily.

The enzyme catalyses (2R)-2-phosphoglycerate = (2R)-3-phosphoglycerate. The protein operates within carbohydrate degradation; glycolysis; pyruvate from D-glyceraldehyde 3-phosphate: step 3/5. In terms of biological role, catalyzes the interconversion of 2-phosphoglycerate and 3-phosphoglycerate. The protein is 2,3-bisphosphoglycerate-dependent phosphoglycerate mutase of Hydrogenobaculum sp. (strain Y04AAS1).